A 386-amino-acid chain; its full sequence is uncharacterized protein (386 aa).

2 helical membrane-spanning segments follow: residues 54–74 and 347–367; these read AVLQ…AIVA and LLGG…PIAG.

It to M.tuberculosis Rv0628c.

The protein resides in the cell membrane. This is an uncharacterized protein from Mycobacterium tuberculosis (strain CDC 1551 / Oshkosh).